A 200-amino-acid chain; its full sequence is MFAELAPYLSNPRQTLAQLLNFALVLSTAFMGWKALSVYTNSSSPIVVVLSGSMEPAFQRGDLLFLWNNSPRAEVGEIVVYNVQGKDIPIVHRVIKAFGTGDGGKKSQRRLEREADKRSGPGLSSPVSHQMLTKGDNNIADDTELYAQGQDYLDRKLDIVGSVRGYIPAVGYVTIMLAENPWMKTVLLGIMGVMVMLQRE.

Topologically, residues 1–15 (MFAELAPYLSNPRQT) are cytoplasmic. Residues 16 to 33 (LAQLLNFALVLSTAFMGW) form a helical; Signal-anchor for type II membrane protein membrane-spanning segment. Residues 34-200 (KALSVYTNSS…MGVMVMLQRE (167 aa)) are Lumenal-facing. N-linked (GlcNAc...) asparagine glycosylation occurs at Asn41. Catalysis depends on charge relay system residues Ser53 and His92. The interval 101–134 (GDGGKKSQRRLEREADKRSGPGLSSPVSHQMLTK) is disordered. Residues 103 to 119 (GGKKSQRRLEREADKRS) are compositionally biased toward basic and acidic residues. The Charge relay system role is filled by Asp142. The segment at 186–197 (VLLGIMGVMVML) is C-terminal short (CTS) helix.

Belongs to the peptidase S26B family. As to quaternary structure, component of the signal peptidase complex (SPC) composed of a catalytic subunit SEC11 and three accessory subunits SPC1, SPC2 and SPC3. The complex induces a local thinning of the ER membrane which is used to measure the length of the signal peptide (SP) h-region of protein substrates. This ensures the selectivity of the complex towards h-regions shorter than 18-20 amino acids. SPC associates with the translocon complex.

Its subcellular location is the endoplasmic reticulum membrane. The enzyme catalyses Cleavage of hydrophobic, N-terminal signal or leader sequences from secreted and periplasmic proteins.. Catalytic component of the signal peptidase complex (SPC) which catalyzes the cleavage of N-terminal signal sequences from nascent proteins as they are translocated into the lumen of the endoplasmic reticulum. Specifically cleaves N-terminal signal peptides that contain a hydrophobic alpha-helix (h-region) shorter than 18-20 amino acids. The protein is Signal peptidase complex catalytic subunit SEC11 (SEC11) of Arthroderma benhamiae (strain ATCC MYA-4681 / CBS 112371) (Trichophyton mentagrophytes).